Reading from the N-terminus, the 74-residue chain is UPF0346 protein PEPE_1063 (74 aa).

The protein belongs to the UPF0346 family.

This chain is UPF0346 protein PEPE_1063, found in Pediococcus pentosaceus (strain ATCC 25745 / CCUG 21536 / LMG 10740 / 183-1w).